The sequence spans 158 residues: Transcription elongation factor GreA (158 aa).

A coiled-coil region spans residues 8 to 74 (TKGGYNKLKD…TLERVLSTAT (67 aa)).

It belongs to the GreA/GreB family.

In terms of biological role, necessary for efficient RNA polymerase transcription elongation past template-encoded arresting sites. The arresting sites in DNA have the property of trapping a certain fraction of elongating RNA polymerases that pass through, resulting in locked ternary complexes. Cleavage of the nascent transcript by cleavage factors such as GreA or GreB allows the resumption of elongation from the new 3'terminus. GreA releases sequences of 2 to 3 nucleotides. The protein is Transcription elongation factor GreA of Chloroherpeton thalassium (strain ATCC 35110 / GB-78).